Consider the following 209-residue polypeptide: Large ribosomal subunit protein uL3 (209 aa).

An N5-methylglutamine modification is found at Q150.

This sequence belongs to the universal ribosomal protein uL3 family. In terms of assembly, part of the 50S ribosomal subunit. Forms a cluster with proteins L14 and L19. Post-translationally, methylated by PrmB.

In terms of biological role, one of the primary rRNA binding proteins, it binds directly near the 3'-end of the 23S rRNA, where it nucleates assembly of the 50S subunit. In Proteus mirabilis (strain HI4320), this protein is Large ribosomal subunit protein uL3.